We begin with the raw amino-acid sequence, 157 residues long: uncharacterized protein (157 aa).

Residue Lys-115 forms an Isoglutamyl lysine isopeptide (Lys-Gln) (interchain with Q-Cter in protein Pup) linkage.

This is an uncharacterized protein from Mycolicibacterium smegmatis (strain ATCC 700084 / mc(2)155) (Mycobacterium smegmatis).